A 364-amino-acid polypeptide reads, in one-letter code: Dermonecrotic toxin SPH (364 aa).

Positions 1-17 are cleaved as a signal peptide; the sequence is MIRIFALITALAITVKC. The Nucleophile role is filled by histidine 29. 2 residues coordinate Mg(2+): glutamate 49 and aspartate 51. Histidine 65 is a catalytic residue. 2 disulfide bridges follow: cysteine 69/cysteine 75 and cysteine 71/cysteine 215. Aspartate 109 serves as a coordination point for Mg(2+).

This sequence belongs to the arthropod phospholipase D family. Mg(2+) serves as cofactor. As to expression, expressed in salivary glands.

It localises to the secreted. It carries out the reaction an N-(acyl)-sphingosylphosphocholine = an N-(acyl)-sphingosyl-1,3-cyclic phosphate + choline. The enzyme catalyses an N-(acyl)-sphingosylphosphoethanolamine = an N-(acyl)-sphingosyl-1,3-cyclic phosphate + ethanolamine. The catalysed reaction is a 1-acyl-sn-glycero-3-phosphocholine = a 1-acyl-sn-glycero-2,3-cyclic phosphate + choline. It catalyses the reaction a 1-acyl-sn-glycero-3-phosphoethanolamine = a 1-acyl-sn-glycero-2,3-cyclic phosphate + ethanolamine. Functionally, dermonecrotic toxins cleave the phosphodiester linkage between the phosphate and headgroup of certain phospholipids (sphingolipid and lysolipid substrates), forming an alcohol (often choline) and a cyclic phosphate. Acts on sphingomyelin (SM). It may also act on ceramide phosphoethanolamine (CPE), lysophosphatidylcholine (LPC) and lysophosphatidylethanolamine (LPE), but not on lysophosphatidylserine (LPS), and lysophosphatidylglycerol (LPG). It acts by transphosphatidylation, releasing exclusively cyclic phosphate products as second products. Induces dermonecrosis, hemolysis, increased vascular permeability, edema, inflammatory response, and platelet aggregation. This chain is Dermonecrotic toxin SPH (SPH), found in Ixodes scapularis (Black-legged tick).